Consider the following 466-residue polypeptide: Citrate synthase, mitochondrial (466 aa).

Residues 1-27 (MALLTAAARLLGTKNASCLVLAARHAS) constitute a mitochondrion transit peptide. Residues 2-21 (ALLTAAARLLGTKNASCLVL) carry the SIFI-degron motif. Lysine 57 carries the post-translational modification N6-succinyllysine. The residue at position 76 (lysine 76) is an N6-acetyllysine; alternate. N6-succinyllysine; alternate is present on lysine 76. 2 positions are modified to N6-succinyllysine: lysine 103 and lysine 193. Residue histidine 301 is part of the active site. N6-acetyllysine; alternate is present on residues lysine 321 and lysine 327. Residues lysine 321 and lysine 327 each carry the N6-succinyllysine; alternate modification. Residue histidine 347 is part of the active site. Residue arginine 356 coordinates oxaloacetate. Residue lysine 375 is modified to N6-acetyllysine; alternate. Lysine 375 is modified (N6-succinyllysine; alternate). Residue lysine 382 is modified to N6-acetyllysine. Lysine 393 carries the N6-acetyllysine; alternate modification. At lysine 393 the chain carries N6-succinyllysine; alternate. Lysine 395 is modified (N6,N6,N6-trimethyllysine). Residue aspartate 402 is part of the active site. Arginine 428 and arginine 448 together coordinate oxaloacetate. Lysine 450 is modified (N6-succinyllysine). Lysine 459 is subject to N6-acetyllysine; alternate. Position 459 is an N6-succinyllysine; alternate (lysine 459).

It belongs to the citrate synthase family. As to quaternary structure, homodimer. In terms of processing, methylated. Trimethylation at Lys-395 by CSKMT decreases citrate synthase activity. Post-translationally, in response to mitochondrial stress, the precursor protein is ubiquitinated by the SIFI complex in the cytoplasm before mitochondrial import, leading to its degradation. Within the SIFI complex, UBR4 initiates ubiquitin chain that are further elongated or branched by KCMF1.

It localises to the mitochondrion matrix. The catalysed reaction is oxaloacetate + acetyl-CoA + H2O = citrate + CoA + H(+). It participates in carbohydrate metabolism; tricarboxylic acid cycle; isocitrate from oxaloacetate: step 1/2. Its function is as follows. Key enzyme of the Krebs tricarboxylic acid cycle which catalyzes the synthesis of citrate from acetyl coenzyme A and oxaloacetate. The polypeptide is Citrate synthase, mitochondrial (CS) (Macaca fascicularis (Crab-eating macaque)).